The sequence spans 284 residues: Alpha-S1-casein (284 aa).

An N-terminal signal peptide occupies residues Met-1–Ala-15. 2 disordered regions span residues Arg-21–Gln-44 and Ser-78–Glu-111. Low complexity-rich tracts occupy residues Ala-24–Ser-36 and Ser-78–Ser-99. Residues Ser-79, Ser-93, Ser-94, Ser-95, Ser-96, Ser-97, Ser-98, and Ser-99 each carry the phosphoserine modification. Repeat copies occupy residues Leu-138–Ser-143, Leu-144–Ser-149, Leu-150–Ser-155, Leu-156–Leu-161, Leu-162–Ser-167, Leu-168–Ala-173, Leu-174–Ser-179, Leu-180–Ser-185, Leu-186–Ser-191, and Leu-192–His-197. The segment at Leu-138–His-197 is 10 X 6 AA tandem repeats.

Belongs to the alpha-casein family. Mammary gland specific. Secreted in milk.

The protein resides in the secreted. Important role in the capacity of milk to transport calcium phosphate. The chain is Alpha-S1-casein (Csn1s1) from Rattus norvegicus (Rat).